Reading from the N-terminus, the 337-residue chain is Glyceraldehyde-3-phosphate dehydrogenase, cytosolic (337 aa).

NAD(+) is bound by residues 13 to 14 (RI), aspartate 35, and arginine 82. Residues 153-155 (SCT), threonine 184, 213-214 (TG), and arginine 236 contribute to the D-glyceraldehyde 3-phosphate site. Residue cysteine 154 is the Nucleophile of the active site. Asparagine 318 contributes to the NAD(+) binding site.

This sequence belongs to the glyceraldehyde-3-phosphate dehydrogenase family. As to quaternary structure, homotetramer.

The protein resides in the cytoplasm. The enzyme catalyses D-glyceraldehyde 3-phosphate + phosphate + NAD(+) = (2R)-3-phospho-glyceroyl phosphate + NADH + H(+). Its pathway is carbohydrate degradation; glycolysis; pyruvate from D-glyceraldehyde 3-phosphate: step 1/5. Its function is as follows. Key enzyme in glycolysis that catalyzes the first step of the pathway by converting D-glyceraldehyde 3-phosphate (G3P) into 3-phospho-D-glyceroyl phosphate. Essential for the maintenance of cellular ATP levels and carbohydrate metabolism. This chain is Glyceraldehyde-3-phosphate dehydrogenase, cytosolic (GAPC), found in Craterostigma plantagineum (Blue gem).